Here is a 180-residue protein sequence, read N- to C-terminus: MNLNLIKAGNNIPSDIYVIIEISSNSSPIKYEVDKQSGVLFVDRFIPTPMFYPCNYGYINETLSLDGDPLDVLVPSPYPIQSNVVINCKPVGILKMHDESGNDAKIIAVPNDKVSKEYENINDISDISELLKKQISHFFQYYKTLEKEKWVEIIGWGDHHEAKLEIKNSYDRAKKNTSLK.

Lysine 30, arginine 44, and tyrosine 56 together coordinate substrate. Aspartate 66, aspartate 71, and aspartate 103 together coordinate Mg(2+). Residue tyrosine 142 coordinates substrate.

This sequence belongs to the PPase family. Homohexamer. It depends on Mg(2+) as a cofactor.

It is found in the cytoplasm. The enzyme catalyses diphosphate + H2O = 2 phosphate + H(+). Catalyzes the hydrolysis of inorganic pyrophosphate (PPi) forming two phosphate ions. The protein is Inorganic pyrophosphatase of Buchnera aphidicola subsp. Schizaphis graminum (strain Sg).